The primary structure comprises 333 residues: Acyl-CoA wax alcohol acyltransferase 2 (333 aa).

Helical transmembrane passes span 15 to 35 (VFAL…VIIV), 38 to 58 (YLVV…WLAF), and 130 to 150 (TFPG…VPFL).

This sequence belongs to the diacylglycerol acyltransferase family. As to quaternary structure, monomer. Expressed in Mueller cells of the retina (at protein level). Abundant in tissues rich in sebaceous glands such as the preputial gland and eyelid.

It localises to the endoplasmic reticulum membrane. It carries out the reaction a long chain fatty alcohol + a fatty acyl-CoA = a wax ester + CoA. The catalysed reaction is all-trans-retinol + an acyl-CoA = an all-trans-retinyl ester + CoA. The enzyme catalyses an acyl-CoA + a 1,2-diacyl-sn-glycerol = a triacyl-sn-glycerol + CoA. It catalyses the reaction 9-cis-retinol + a fatty acyl-CoA = 9-cis-retinyl ester + CoA. It carries out the reaction 11-cis-retinol + a fatty acyl-CoA = 11-cis-retinyl ester + CoA. The catalysed reaction is 13-cis-retinol + a fatty acyl-CoA = 13-cis-retinyl ester + CoA. The enzyme catalyses a 1-acylglycerol + an acyl-CoA = a 1,2-diacylglycerol + CoA. It catalyses the reaction 1-O-alkylglycerol + an acyl-CoA = 1-O-alkyl-3-acylglycerol + CoA. It carries out the reaction a 2-acylglycerol + an acyl-CoA = a 1,2-diacyl-sn-glycerol + CoA. The catalysed reaction is 2-(9Z-octadecenoyl)-glycerol + hexadecanoyl-CoA = 1-hexadecanoyl-2-(9Z-octadecenoyl)-sn-glycerol + CoA. The enzyme catalyses 1,2-di-(9Z-octadecenoyl)-sn-glycerol + hexadecanoyl-CoA = 1,2-di-(9Z)-octadecenoyl-3-hexadecanoyl-sn-glycerol + CoA. It catalyses the reaction hexadecan-1-ol + hexadecanoyl-CoA = hexadecanyl hexadecanoate + CoA. It carries out the reaction hexadecane-1,2-diol + hexadecanoyl-CoA = 2-hydroxyhexadecyl hexadecanoate + CoA. The catalysed reaction is all-trans-retinol + hexadecanoyl-CoA = all-trans-retinyl hexadecanoate + CoA. The enzyme catalyses 1,2-di-(9Z-octadecenoyl)-sn-glycerol + (9Z)-octadecenoyl-CoA = 1,2,3-tri-(9Z-octadecenoyl)-glycerol + CoA. It catalyses the reaction hexadecan-1-ol + (9Z)-octadecenoyl-CoA = hexadecanyl (9Z)-octadecenoate + CoA. It carries out the reaction (9Z)-hexadecen-1-ol + (9Z)-octadecenoyl-CoA = 1-O-(9Z)-hexadecenyl (9Z)-octadecenoate + CoA. The catalysed reaction is octadecan-1-ol + (9Z)-octadecenoyl-CoA = 1-O-octadecyl (9Z)-octadecenoate + CoA. The enzyme catalyses (9Z)-octadecen-1-ol + (9Z)-octadecenoyl-CoA = 1-O-(9Z)-octadecenyl (9Z)-octadecenoate + CoA. It catalyses the reaction hexadecan-1-ol + (9Z)-hexadecenoyl-CoA = 1-O-hexadecyl (9Z)-hexadecenoate + CoA. It carries out the reaction hexadecan-1-ol + octadecanoyl-CoA = hexadecanyl octadecanoate + CoA. The catalysed reaction is 11-cis-retinol + hexadecanoyl-CoA = 11-cis-retinyl hexadecanoate + CoA. The enzyme catalyses 1-O-(9Z-octadecenyl)-glycerol + (9Z)-octadecenoyl-CoA = 1-O-(9Z-octadecyl)-3-(9Z-octadecenoyl)-glycerol + CoA. It catalyses the reaction 1-(9Z-octadecenoyl)-glycerol + (9Z)-octadecenoyl-CoA = 1,2-di-(9Z-octadecenoyl)-glycerol + CoA. It carries out the reaction 11-cis-retinol + tetradecanoyl-CoA = 11-cis-retinyl tetradecanoate + CoA. The catalysed reaction is 9-cis-retinol + tetradecanoyl-CoA = 9-cis-retinyl tetradecanoate + CoA. The enzyme catalyses 9-cis-retinol + hexadecanoyl-CoA = 9-cis-retinyl hexadecanoate + CoA. It catalyses the reaction 13-cis-retinol + tetradecanoyl-CoA = 13-cis-retinyl tetradecanoate + CoA. It carries out the reaction all-trans-retinol + tetradecanoyl-CoA = all-trans-retinyl tetradecanoate + CoA. The catalysed reaction is tetradecan-1-ol + tetradecanoyl-CoA = tetradecanyl tetradecanoate + CoA. With respect to regulation, 11-cis retinoids act as allosteric modulators of acyl-CoA retinol O-fatty-acyltransferase (ARAT) activity by suppressing esterification of 9-cis, 13-cis, or all-trans retinols concurrently increasing the enzyme specificity toward 11-cis isomer. In terms of biological role, acyltransferase that catalyzes the formation of ester bonds between fatty alcohols and fatty acyl-CoAs to form wax monoesters. Shows a preference for medium chain acyl-CoAs from C12 to C16 in length and fatty alcohols shorter than C20, as the acyl donor and acceptor, respectively. Also possesses fatty acyl-CoA retinol acyltransferase (ARAT) activity that preferentially esterifies 11-cis-retinol, a chromophore precursor of bleached opsin pigments in cone cells. Shows higher catalytic efficiency toward 11-cis-retinol versus 9-cis-retinol, 13- cis-retinol and all-trans-retinol substrates. This Mus musculus (Mouse) protein is Acyl-CoA wax alcohol acyltransferase 2 (Awat2).